The chain runs to 220 residues: FMN-dependent NADH:quinone oxidoreductase 1 (220 aa).

18–20 (SVS) is an FMN binding site.

It belongs to the azoreductase type 1 family. In terms of assembly, homodimer. The cofactor is FMN.

The catalysed reaction is 2 a quinone + NADH + H(+) = 2 a 1,4-benzosemiquinone + NAD(+). It catalyses the reaction N,N-dimethyl-1,4-phenylenediamine + anthranilate + 2 NAD(+) = 2-(4-dimethylaminophenyl)diazenylbenzoate + 2 NADH + 2 H(+). In terms of biological role, quinone reductase that provides resistance to thiol-specific stress caused by electrophilic quinones. Its function is as follows. Also exhibits azoreductase activity. Catalyzes the reductive cleavage of the azo bond in aromatic azo compounds to the corresponding amines. The polypeptide is FMN-dependent NADH:quinone oxidoreductase 1 (Bacillus anthracis).